Consider the following 396-residue polypeptide: Elongation factor Tu (396 aa).

The tr-type G domain maps to 10–206; the sequence is KPHVNVGTIG…ALDSYIPEPE (197 aa). A G1 region spans residues 19 to 26; the sequence is GHVDHGKT. Position 19–26 (19–26) interacts with GTP; it reads GHVDHGKT. A Mg(2+)-binding site is contributed by threonine 26. The tract at residues 60-64 is G2; that stretch reads GITIN. A G3 region spans residues 81 to 84; it reads DCPG. Residues 81–85 and 136–139 contribute to the GTP site; these read DCPGH and NKAD. Residues 136–139 form a G4 region; that stretch reads NKAD. Positions 174–176 are G5; sequence SAL.

This sequence belongs to the TRAFAC class translation factor GTPase superfamily. Classic translation factor GTPase family. EF-Tu/EF-1A subfamily. In terms of assembly, monomer.

The protein resides in the cytoplasm. The catalysed reaction is GTP + H2O = GDP + phosphate + H(+). Functionally, GTP hydrolase that promotes the GTP-dependent binding of aminoacyl-tRNA to the A-site of ribosomes during protein biosynthesis. The sequence is that of Elongation factor Tu from Nitrosomonas europaea (strain ATCC 19718 / CIP 103999 / KCTC 2705 / NBRC 14298).